Consider the following 373-residue polypeptide: Glutamate 5-kinase (373 aa).

Lysine 15 is a binding site for ATP. Serine 55, aspartate 142, and asparagine 154 together coordinate substrate. 174–175 is an ATP binding site; that stretch reads TD. In terms of domain architecture, PUA spans 281–359; the sequence is RGSVVLDDGA…SQIEAVLGYV (79 aa).

This sequence belongs to the glutamate 5-kinase family.

It localises to the cytoplasm. It carries out the reaction L-glutamate + ATP = L-glutamyl 5-phosphate + ADP. Its pathway is amino-acid biosynthesis; L-proline biosynthesis; L-glutamate 5-semialdehyde from L-glutamate: step 1/2. Catalyzes the transfer of a phosphate group to glutamate to form L-glutamate 5-phosphate. This is Glutamate 5-kinase from Nitrosomonas eutropha (strain DSM 101675 / C91 / Nm57).